The chain runs to 245 residues: tRNA pseudouridine synthase A (245 aa).

The Nucleophile role is filled by Asp52. Residue Tyr111 participates in substrate binding.

The protein belongs to the tRNA pseudouridine synthase TruA family. Homodimer.

The catalysed reaction is uridine(38/39/40) in tRNA = pseudouridine(38/39/40) in tRNA. In terms of biological role, formation of pseudouridine at positions 38, 39 and 40 in the anticodon stem and loop of transfer RNAs. This Rickettsia typhi (strain ATCC VR-144 / Wilmington) protein is tRNA pseudouridine synthase A.